We begin with the raw amino-acid sequence, 185 residues long: Ribosome-recycling factor (185 aa).

It belongs to the RRF family.

The protein resides in the cytoplasm. Its function is as follows. Responsible for the release of ribosomes from messenger RNA at the termination of protein biosynthesis. May increase the efficiency of translation by recycling ribosomes from one round of translation to another. This chain is Ribosome-recycling factor, found in Wolbachia pipientis subsp. Culex pipiens (strain wPip).